We begin with the raw amino-acid sequence, 218 residues long: Protein-L-isoaspartate O-methyltransferase (218 aa).

Serine 69 is an active-site residue.

Belongs to the methyltransferase superfamily. L-isoaspartyl/D-aspartyl protein methyltransferase family.

It localises to the cytoplasm. The catalysed reaction is [protein]-L-isoaspartate + S-adenosyl-L-methionine = [protein]-L-isoaspartate alpha-methyl ester + S-adenosyl-L-homocysteine. Catalyzes the methyl esterification of L-isoaspartyl residues in peptides and proteins that result from spontaneous decomposition of normal L-aspartyl and L-asparaginyl residues. It plays a role in the repair and/or degradation of damaged proteins. The chain is Protein-L-isoaspartate O-methyltransferase from Aromatoleum aromaticum (strain DSM 19018 / LMG 30748 / EbN1) (Azoarcus sp. (strain EbN1)).